The chain runs to 616 residues: Polypeptide N-acetylgalactosaminyltransferase 3 (616 aa).

Residues 13 to 33 traverse the membrane as a helical; Signal-anchor for type II membrane protein segment; it reads FFHWKLWKFSIIVFVFLVFLF. The interval 182-291 is catalytic subdomain A; it reads LPTTSIIIVF…YGWLEPLLAR (110 aa). Mn(2+) is bound by residues Asp275, His277, and His413. Residues 354-416 form a catalytic subdomain B region; the sequence is PIRTPTFAGG…PCSVVGHVFR (63 aa). N-linked (GlcNAc...) asparagine glycosylation occurs at Asn482. Positions 512-616 constitute a Ricin B-type lectin domain; sequence NRMCLDVGEN…FQKWIFGQND (105 aa). Cys515 and Cys533 are oxidised to a cystine. Residues Asp517, Glu520, His534, and Asn539 each coordinate UDP-N-acetyl-alpha-D-galactosamine. A disulfide bridge connects residues Cys588 and Cys601.

Belongs to the glycosyltransferase 2 family. GalNAc-T subfamily. Mn(2+) is required as a cofactor.

It localises to the golgi apparatus. It is found in the golgi stack membrane. It catalyses the reaction L-seryl-[protein] + UDP-N-acetyl-alpha-D-galactosamine = a 3-O-[N-acetyl-alpha-D-galactosaminyl]-L-seryl-[protein] + UDP + H(+). The enzyme catalyses L-threonyl-[protein] + UDP-N-acetyl-alpha-D-galactosamine = a 3-O-[N-acetyl-alpha-D-galactosaminyl]-L-threonyl-[protein] + UDP + H(+). It participates in protein modification; protein glycosylation. In terms of biological role, catalyzes the initial reaction in O-linked oligosaccharide biosynthesis, the transfer of an N-acetyl-D-galactosamine residue to a serine or threonine residue on the protein receptor. Glycosylates FGF23. The protein is Polypeptide N-acetylgalactosaminyltransferase 3 (GALNT3) of Taeniopygia guttata (Zebra finch).